The sequence spans 462 residues: Putative amidase AmiB2 (462 aa).

Residues Lys-81 and Ser-155 each act as charge relay system in the active site. The active-site Acyl-ester intermediate is Ser-179.

This sequence belongs to the amidase family.

It catalyses the reaction a monocarboxylic acid amide + H2O = a monocarboxylate + NH4(+). The sequence is that of Putative amidase AmiB2 (amiB2) from Mycobacterium bovis (strain ATCC BAA-935 / AF2122/97).